A 132-amino-acid chain; its full sequence is Extracellular small neutral protease (132 aa).

The Ca(2+) site is built by Asp-76 and Thr-78. His-83 is a Zn(2+) binding site. The active site involves Glu-84. Positions 87 and 93 each coordinate Zn(2+). A disulfide bridge connects residues Cys-99 and Cys-112.

Belongs to the peptidase M7 family. Requires Ca(2+) as cofactor. It depends on Zn(2+) as a cofactor.

The protein localises to the secreted. The enzyme catalyses Hydrolyzes proteins with a preference for Tyr or Phe in the P1' position. Has no action on amino-acid p-nitroanilides.. In terms of biological role, specifically hydrolyzes the peptide bond at the imino side of aromatic residues. The polypeptide is Extracellular small neutral protease (snpA) (Streptomyces caespitosus).